A 439-amino-acid polypeptide reads, in one-letter code: Ribosomal protein uS12 methylthiotransferase RimO (439 aa).

Residues 6-116 (GKVGFVSLGC…VMNQVHQVAP (111 aa)) form the MTTase N-terminal domain. Residues Cys-15, Cys-51, Cys-80, Cys-148, Cys-152, and Cys-155 each contribute to the [4Fe-4S] cluster site. The 238-residue stretch at 134–371 (LTPKHYAYLK…MEVQQRISAS (238 aa)) folds into the Radical SAM core domain. Positions 374–439 (QAKIGKRMDV…DEYDLWGRPV (66 aa)) constitute a TRAM domain.

This sequence belongs to the methylthiotransferase family. RimO subfamily. Requires [4Fe-4S] cluster as cofactor.

Its subcellular location is the cytoplasm. The enzyme catalyses L-aspartate(89)-[ribosomal protein uS12]-hydrogen + (sulfur carrier)-SH + AH2 + 2 S-adenosyl-L-methionine = 3-methylsulfanyl-L-aspartate(89)-[ribosomal protein uS12]-hydrogen + (sulfur carrier)-H + 5'-deoxyadenosine + L-methionine + A + S-adenosyl-L-homocysteine + 2 H(+). Its function is as follows. Catalyzes the methylthiolation of an aspartic acid residue of ribosomal protein uS12. The chain is Ribosomal protein uS12 methylthiotransferase RimO from Hahella chejuensis (strain KCTC 2396).